The sequence spans 251 residues: ATP synthase subunit a (251 aa).

5 helical membrane-spanning segments follow: residues 28–48, 84–104, 130–150, 192–212, and 220–240; these read TDTV…AFFL, IAPF…ISNW, INYV…AGIW, IFAG…IMWA, and FDLF…ILYF.

The protein belongs to the ATPase A chain family. In terms of assembly, F-type ATPases have 2 components, CF(1) - the catalytic core - and CF(0) - the membrane proton channel. CF(1) has five subunits: alpha(3), beta(3), gamma(1), delta(1), epsilon(1). CF(0) has three main subunits: a(1), b(2) and c(9-12). The alpha and beta chains form an alternating ring which encloses part of the gamma chain. CF(1) is attached to CF(0) by a central stalk formed by the gamma and epsilon chains, while a peripheral stalk is formed by the delta and b chains.

The protein localises to the cell membrane. Functionally, key component of the proton channel; it plays a direct role in the translocation of protons across the membrane. The protein is ATP synthase subunit a of Mycobacterium leprae (strain TN).